We begin with the raw amino-acid sequence, 97 residues long: Early nodulin-75 (97 aa).

The interval 1–97 is disordered; it reads RPHVHPPPEH…PEYQPPHEKP (97 aa). Composition is skewed to pro residues over residues 9 to 22 and 31 to 43; these read EHQP…PEYQ and VHPP…PYQK. A compositionally biased stretch (basic and acidic residues) spans 76–97; it reads PPHEKPPHEHPPPEYQPPHEKP.

Belongs to the nodulin 75 family.

Functionally, involved in early stages of root nodule development. The chain is Early nodulin-75 (ENOD2) from Medicago sativa (Alfalfa).